We begin with the raw amino-acid sequence, 419 residues long: Phospho-N-acetylmuramoyl-pentapeptide-transferase (419 aa).

A run of 10 helical transmembrane segments spans residues 22-42 (YVSFRSAVAIVLALLLATVIG), 72-92 (TPTMGGLIIIISILIPTLLLA), 99-119 (ILLMIVTTVLLGSLGFLDDYI), 135-155 (IIGQVGLGFIIGIVLYMNPAV), 208-228 (VLFGWILFVCVAVVVVTFISN), 238-258 (GLATGSSAIIGVVLAIFAYVS), 278-298 (LTIFAFAFVGATIGFLWYNAY), 303-323 (FMGDTGSLTLGGIIAVFALII), 328-348 (LLPILCFVFIIEGLSVMIQVF), and 396-416 (KITVRFWLVGIIMAAITIATL).

It belongs to the glycosyltransferase 4 family. MraY subfamily. The cofactor is Mg(2+).

Its subcellular location is the cell inner membrane. It catalyses the reaction UDP-N-acetyl-alpha-D-muramoyl-L-alanyl-gamma-D-glutamyl-meso-2,6-diaminopimeloyl-D-alanyl-D-alanine + di-trans,octa-cis-undecaprenyl phosphate = di-trans,octa-cis-undecaprenyl diphospho-N-acetyl-alpha-D-muramoyl-L-alanyl-D-glutamyl-meso-2,6-diaminopimeloyl-D-alanyl-D-alanine + UMP. Its pathway is cell wall biogenesis; peptidoglycan biosynthesis. Catalyzes the initial step of the lipid cycle reactions in the biosynthesis of the cell wall peptidoglycan: transfers peptidoglycan precursor phospho-MurNAc-pentapeptide from UDP-MurNAc-pentapeptide onto the lipid carrier undecaprenyl phosphate, yielding undecaprenyl-pyrophosphoryl-MurNAc-pentapeptide, known as lipid I. The polypeptide is Phospho-N-acetylmuramoyl-pentapeptide-transferase (Porphyromonas gingivalis (strain ATCC BAA-308 / W83)).